Here is a 185-residue protein sequence, read N- to C-terminus: Ribosome-recycling factor (185 aa).

The protein belongs to the RRF family.

The protein resides in the cytoplasm. In terms of biological role, responsible for the release of ribosomes from messenger RNA at the termination of protein biosynthesis. May increase the efficiency of translation by recycling ribosomes from one round of translation to another. The chain is Ribosome-recycling factor from Tolumonas auensis (strain DSM 9187 / NBRC 110442 / TA 4).